The chain runs to 251 residues: MWRLLTRVPAPLLRMHFSDSWAALPTSAGLKTLLPVPTFENVSIPERSKLKFVERVPLVPKVRREPKNLKDIRGPSTEATDFTEGNFAILALGGGYLHWGHFEMMRLTINRFMDPKNMFAIWRVPAPFKPITRKGVGQRMGGGKGAIDHYVTPVKTGCLVVEMGGRCEFEEVKGILNQVAHKLPFPAKAVSRKTLERMHQNQRERELNNQNPWTFEHIATANMFGIRKFLSPYDLTQKGRYWGKFYMPKRV.

Residues 1 to 29 (MWRLLTRVPAPLLRMHFSDSWAALPTSAG) constitute a mitochondrion transit peptide.

It belongs to the universal ribosomal protein uL16 family. In terms of assembly, component of the mitochondrial ribosome large subunit (39S) which comprises a 16S rRNA and about 50 distinct proteins.

The protein resides in the mitochondrion. In Mus musculus (Mouse), this protein is Large ribosomal subunit protein uL16m (Mrpl16).